The following is a 475-amino-acid chain: Cytochrome c-552 (475 aa).

An N-terminal signal peptide occupies residues 1 to 29 (MSIKHWMSAPIAVATLFASQLLLAGSVLA). Residues 38–57 (PRNDAFEQKHPDQYHSWKAT) form a disordered region. Histidine 92 is a binding site for heme c. Heme is bound by residues cysteine 120, cysteine 123, and lysine 124. Heme c-binding residues include cysteine 158, cysteine 161, histidine 162, cysteine 207, cysteine 210, and histidine 211. The Ca(2+) site is built by glutamate 213, tyrosine 214, lysine 259, and glutamine 261. A substrate-binding site is contributed by tyrosine 214. Histidine 262 contributes to the substrate binding site. Residues histidine 273, cysteine 280, cysteine 283, histidine 284, histidine 299, cysteine 312, cysteine 315, histidine 316, and histidine 391 each coordinate heme c.

The protein belongs to the cytochrome c-552 family. Requires Ca(2+) as cofactor. Heme c serves as cofactor.

It localises to the periplasm. It catalyses the reaction 6 Fe(III)-[cytochrome c] + NH4(+) + 2 H2O = 6 Fe(II)-[cytochrome c] + nitrite + 8 H(+). Its pathway is nitrogen metabolism; nitrate reduction (assimilation). Its function is as follows. Catalyzes the reduction of nitrite to ammonia, consuming six electrons in the process. The protein is Cytochrome c-552 of Vibrio parahaemolyticus serotype O3:K6 (strain RIMD 2210633).